A 141-amino-acid polypeptide reads, in one-letter code: Acetyltransferase ECA0875 (141 aa).

One can recognise an N-acetyltransferase domain in the interval 1–141; that stretch reads MEIRIFRQDD…GKRLIEDREY (141 aa).

Belongs to the acetyltransferase family. YpeA subfamily.

The chain is Acetyltransferase ECA0875 from Pectobacterium atrosepticum (strain SCRI 1043 / ATCC BAA-672) (Erwinia carotovora subsp. atroseptica).